The following is a 745-amino-acid chain: Receptor-type adenylate cyclase (745 aa).

Residues 1 to 341 (GELGQTDRFF…NEGALTRAQL (341 aa)) are Extracellular-facing. 4 N-linked (GlcNAc...) asparagine glycosylation sites follow: Asn15, Asn50, Asn189, and Asn312. The chain crosses the membrane as a helical span at residues 342 to 362 (IGVVVGTIFAVLLLLALGIVL). The Cytoplasmic portion of the chain corresponds to 363-745 (CVALRNTRDN…GSDEVARTCV (383 aa)). Positions 384–538 (TLIFTDIESS…RTPNLAARTE (155 aa)) constitute a Guanylate cyclase domain. Residues Asp389 and Asp432 each coordinate Mg(2+).

The protein belongs to the adenylyl cyclase class-3 family. The cofactor is Mg(2+).

Its subcellular location is the cell membrane. It carries out the reaction ATP = 3',5'-cyclic AMP + diphosphate. Functionally, could act as a receptor for an unknown ligand. This chain is Receptor-type adenylate cyclase, found in Trypanosoma congolense.